Consider the following 136-residue polypeptide: MAFSTGGNRGPMADINVTPLVDVMLVLLIIFIVTAPIMTYPIAVDLPQRVLNPPPQTTEPPPPIELRIDASNQVFWNNSPTPVAQLQQKMEEVVQADPTNQPELRIDANEDAEYEVMAKVLAAAKNSQMKKIGFMQ.

Over 1-23 (MAFSTGGNRGPMADINVTPLVDV) the chain is Cytoplasmic. The helical transmembrane segment at 24–44 (MLVLLIIFIVTAPIMTYPIAV) threads the bilayer. The Periplasmic portion of the chain corresponds to 45–136 (DLPQRVLNPP…SQMKKIGFMQ (92 aa)).

Belongs to the ExbD/TolR family. The accessory proteins ExbB and ExbD seem to form a complex with TonB.

Its subcellular location is the cell inner membrane. Involved in the TonB-dependent energy-dependent transport of various receptor-bound substrates. This chain is Biopolymer transport protein exbD2 (exbD2), found in Xanthomonas campestris pv. campestris (strain ATCC 33913 / DSM 3586 / NCPPB 528 / LMG 568 / P 25).